Here is a 248-residue protein sequence, read N- to C-terminus: Leucyl/phenylalanyl-tRNA--protein transferase (248 aa).

This sequence belongs to the L/F-transferase family.

It localises to the cytoplasm. It catalyses the reaction N-terminal L-lysyl-[protein] + L-leucyl-tRNA(Leu) = N-terminal L-leucyl-L-lysyl-[protein] + tRNA(Leu) + H(+). It carries out the reaction N-terminal L-arginyl-[protein] + L-leucyl-tRNA(Leu) = N-terminal L-leucyl-L-arginyl-[protein] + tRNA(Leu) + H(+). The catalysed reaction is L-phenylalanyl-tRNA(Phe) + an N-terminal L-alpha-aminoacyl-[protein] = an N-terminal L-phenylalanyl-L-alpha-aminoacyl-[protein] + tRNA(Phe). Functionally, functions in the N-end rule pathway of protein degradation where it conjugates Leu, Phe and, less efficiently, Met from aminoacyl-tRNAs to the N-termini of proteins containing an N-terminal arginine or lysine. The sequence is that of Leucyl/phenylalanyl-tRNA--protein transferase from Ralstonia pickettii (strain 12J).